Reading from the N-terminus, the 343-residue chain is Small ribosomal subunit biogenesis GTPase RsgA (343 aa).

The region spanning 116 to 275 (RGQLKPVAAN…LIDSPGIREF (160 aa)) is the CP-type G domain. GTP contacts are provided by residues 163–166 (NKAD) and 217–225 (GQSGVGKSS). C299, C304, H306, and C312 together coordinate Zn(2+).

Belongs to the TRAFAC class YlqF/YawG GTPase family. RsgA subfamily. Monomer. Associates with 30S ribosomal subunit, binds 16S rRNA. Zn(2+) serves as cofactor.

It is found in the cytoplasm. One of several proteins that assist in the late maturation steps of the functional core of the 30S ribosomal subunit. Helps release RbfA from mature subunits. May play a role in the assembly of ribosomal proteins into the subunit. Circularly permuted GTPase that catalyzes slow GTP hydrolysis, GTPase activity is stimulated by the 30S ribosomal subunit. This Pseudomonas savastanoi pv. phaseolicola (strain 1448A / Race 6) (Pseudomonas syringae pv. phaseolicola (strain 1448A / Race 6)) protein is Small ribosomal subunit biogenesis GTPase RsgA.